The primary structure comprises 123 residues: MPTINQLIAKGREPNKARNKVPALQGCPQKRGVCTRVYTTTPKKPNSALRKVAKVRLTNGYEVVSYIPGEGHNLQEHSVVLIRGGRVKDLPGVRYHILRGVLDTQGIAKRRQRRSLYGAKRPK.

D89 is subject to 3-methylthioaspartic acid.

It belongs to the universal ribosomal protein uS12 family. In terms of assembly, part of the 30S ribosomal subunit. Contacts proteins S8 and S17. May interact with IF1 in the 30S initiation complex.

With S4 and S5 plays an important role in translational accuracy. In terms of biological role, interacts with and stabilizes bases of the 16S rRNA that are involved in tRNA selection in the A site and with the mRNA backbone. Located at the interface of the 30S and 50S subunits, it traverses the body of the 30S subunit contacting proteins on the other side and probably holding the rRNA structure together. The combined cluster of proteins S8, S12 and S17 appears to hold together the shoulder and platform of the 30S subunit. This chain is Small ribosomal subunit protein uS12, found in Granulibacter bethesdensis (strain ATCC BAA-1260 / CGDNIH1).